The following is a 260-amino-acid chain: Putative enoyl-CoA hydratase/isomerase YngF (260 aa).

The protein belongs to the enoyl-CoA hydratase/isomerase family.

The protein is Putative enoyl-CoA hydratase/isomerase YngF (yngF) of Bacillus subtilis (strain 168).